Reading from the N-terminus, the 577-residue chain is Arginine--tRNA ligase (577 aa).

The short motif at proline 122 to histidine 132 is the 'HIGH' region element.

It belongs to the class-I aminoacyl-tRNA synthetase family. Monomer.

Its subcellular location is the cytoplasm. It carries out the reaction tRNA(Arg) + L-arginine + ATP = L-arginyl-tRNA(Arg) + AMP + diphosphate. The polypeptide is Arginine--tRNA ligase (Escherichia coli O8 (strain IAI1)).